We begin with the raw amino-acid sequence, 231 residues long: uncharacterized protein (231 aa).

Helical transmembrane passes span Ile-6 to Ile-26, Asn-39 to Ser-59, and Phe-66 to Phe-86.

The protein localises to the cell membrane. This is an uncharacterized protein from Rickettsia prowazekii (strain Madrid E).